The chain runs to 110 residues: UPF0145 protein (110 aa).

This sequence belongs to the UPF0145 family.

This chain is UPF0145 protein, found in Listeria welshimeri.